An 89-amino-acid polypeptide reads, in one-letter code: uncharacterized protein (89 aa).

The next 2 membrane-spanning stretches (helical) occupy residues 11–31 (IFGA…PIAL) and 63–83 (AAIS…TVVF).

It is found in the cell membrane. This is an uncharacterized protein from Methanocaldococcus jannaschii (strain ATCC 43067 / DSM 2661 / JAL-1 / JCM 10045 / NBRC 100440) (Methanococcus jannaschii).